The following is a 137-amino-acid chain: UBAP1-MVB12-associated (UMA)-domain containing protein 1 (137 aa).

Residues 1-72 (MFHFFRKPPE…VSDPEMENKA (72 aa)) form a disordered region. Positions 32–44 (DEQRMTARGKTSD) are enriched in basic and acidic residues. A compositionally biased stretch (polar residues) spans 50-63 (PLETNKENSSSVTV). The UMA domain maps to 86-134 (LSDVPFTLAPHVLAVQGTITDLPDHLLSYDGSENLSRFWYDFTLENSVL).

The sequence is that of UBAP1-MVB12-associated (UMA)-domain containing protein 1 from Homo sapiens (Human).